A 361-amino-acid chain; its full sequence is Molybdenum import ATP-binding protein ModC (361 aa).

The 228-residue stretch at 1–228 (MLNINIEKQF…EQMRPWVPLQ (228 aa)) folds into the ABC transporter domain. Residue 31–38 (GRSGAGKT) participates in ATP binding. The 68-residue stretch at 289-356 (GSSIRNLLRG…IKGVTMTQMD (68 aa)) folds into the Mop domain.

Belongs to the ABC transporter superfamily. Molybdate importer (TC 3.A.1.8) family. In terms of assembly, the complex is composed of two ATP-binding proteins (ModC), two transmembrane proteins (ModB) and a solute-binding protein (ModA).

The protein resides in the cell inner membrane. It catalyses the reaction molybdate(out) + ATP + H2O = molybdate(in) + ADP + phosphate + H(+). Its function is as follows. Part of the ABC transporter complex ModABC involved in molybdenum import. Responsible for energy coupling to the transport system. The chain is Molybdenum import ATP-binding protein ModC from Shewanella sp. (strain MR-4).